The following is a 401-amino-acid chain: Multidrug resistance protein MdtH (401 aa).

A run of 11 helical transmembrane segments spans residues 13 to 33 (YFLIIDNMFVVIGFYAVFPLI), 34 to 54 (SIHFVEQLGWTAFLVGFALGL), 88 to 108 (IGFIIMSLAHTPTLLCAACIL), 139 to 159 (ILMLEDSICAIIGITLGSWLL), 164 to 184 (FQLVCLTGAILFFIAGMFNAW), 211 to 231 (FIIYTLTLSGYYILSAQVMLM), 248 to 268 (YIYITEAILSLLLIIPITYWM), 275 to 295 (ETRLMLGLVIMIISLSPIGSV), 298 to 318 (LYELLILISLFYIGSIVAEPA), 341 to 361 (LSLALGGTLGYSGGGWLYDLG), and 366 to 386 (FYQLPWIALSIIGTITVLILY).

The protein belongs to the major facilitator superfamily. DHA1 family. MdtH (TC 2.A.1.2.21) subfamily.

It is found in the cell inner membrane. In Blochmanniella floridana, this protein is Multidrug resistance protein MdtH.